The chain runs to 82 residues: Turripeptide Gdm9.1 (82 aa).

The N-terminal stretch at 1-23 is a signal peptide; the sequence is MMAKLMITVMMVLLLSLQQGADG. A propeptide spanning residues 24-46 is cleaved from the precursor; it reads RSERWRKNQMAASRIMRNLITAR. 4-hydroxyproline occurs at positions 49 and 50. Disulfide bonds link cysteine 53-cysteine 68, cysteine 58-cysteine 72, and cysteine 64-cysteine 79. Residues glutamate 60 and glutamate 63 each carry the 4-carboxyglutamate modification.

The protein belongs to the Pg turripeptide superfamily. In terms of tissue distribution, expressed by the venom duct.

It localises to the secreted. In Gemmula diomedea (Gem-turris), this protein is Turripeptide Gdm9.1.